The chain runs to 133 residues: Small ribosomal subunit protein eS24 (133 aa).

Met-1 carries the post-translational modification N-acetylmethionine. Phosphothreonine is present on Thr-9. A Glycyl lysine isopeptide (Lys-Gly) (interchain with G-Cter in SUMO2) cross-link involves residue Lys-37. Positions 92–133 (ARHGLYEKKKTSRKQRKERKNRMKKVRGTAKANVGAGKKPKE) are disordered. Positions 101-119 (KTSRKQRKERKNRMKKVRG) are enriched in basic residues.

It belongs to the eukaryotic ribosomal protein eS24 family. Component of the small ribosomal subunit. Part of the small subunit (SSU) processome, composed of more than 70 proteins and the RNA chaperone small nucleolar RNA (snoRNA) U3.

It is found in the cytoplasm. Its subcellular location is the nucleus. The protein localises to the nucleolus. In terms of biological role, component of the small ribosomal subunit. The ribosome is a large ribonucleoprotein complex responsible for the synthesis of proteins in the cell. Required for processing of pre-rRNA and maturation of 40S ribosomal subunits. Part of the small subunit (SSU) processome, first precursor of the small eukaryotic ribosomal subunit. During the assembly of the SSU processome in the nucleolus, many ribosome biogenesis factors, an RNA chaperone and ribosomal proteins associate with the nascent pre-rRNA and work in concert to generate RNA folding, modifications, rearrangements and cleavage as well as targeted degradation of pre-ribosomal RNA by the RNA exosome. The sequence is that of Small ribosomal subunit protein eS24 (RPS24) from Oryctolagus cuniculus (Rabbit).